The primary structure comprises 285 residues: (2Z,6Z)-farnesyl diphosphate synthase CPT6, chloroplastic (285 aa).

The transit peptide at 1 to 30 directs the protein to the chloroplast; the sequence is MNSLFVGRPIVKSSYNVYTLPSSICGGHFF. Asp65 is a catalytic residue.

Belongs to the UPP synthase family. Mg(2+) serves as cofactor. Expressed in roots and red fruits.

It is found in the plastid. The protein localises to the chloroplast. The enzyme catalyses 2 isopentenyl diphosphate + dimethylallyl diphosphate = (2Z,6Z)-farnesyl diphosphate + 2 diphosphate. It carries out the reaction isopentenyl diphosphate + dimethylallyl diphosphate = neryl diphosphate + diphosphate. The catalysed reaction is neryl diphosphate + isopentenyl diphosphate = (2Z,6Z)-farnesyl diphosphate + diphosphate. Its function is as follows. Uses neryl diphosphate to catalyze the cis-prenyl chain elongation and produce the 15 carbon product (2Z,6Z)-farnesyl diphosphate. The sequence is that of (2Z,6Z)-farnesyl diphosphate synthase CPT6, chloroplastic from Solanum lycopersicum (Tomato).